Reading from the N-terminus, the 329-residue chain is Isopentenyl-diphosphate delta-isomerase (329 aa).

A substrate-binding site is contributed by 4–5 (RK). Residues 59–61 (AMT), serine 89, and asparagine 116 each bind FMN. Residue glutamine 146 coordinates substrate. Glutamate 147 lines the Mg(2+) pocket. FMN contacts are provided by residues lysine 178, serine 203, threonine 208, 252 to 254 (GVR), and 273 to 274 (SR).

It belongs to the IPP isomerase type 2 family. In terms of assembly, homooctamer. Dimer of tetramers. Requires FMN as cofactor. The cofactor is NADPH. Mg(2+) is required as a cofactor.

The protein localises to the cytoplasm. The catalysed reaction is isopentenyl diphosphate = dimethylallyl diphosphate. In terms of biological role, involved in the biosynthesis of isoprenoids. Catalyzes the 1,3-allylic rearrangement of the homoallylic substrate isopentenyl (IPP) to its allylic isomer, dimethylallyl diphosphate (DMAPP). In Streptococcus pyogenes serotype M28 (strain MGAS6180), this protein is Isopentenyl-diphosphate delta-isomerase.